The chain runs to 317 residues: DNA-directed RNA polymerase subunit alpha (317 aa).

The alpha N-terminal domain (alpha-NTD) stretch occupies residues 1-230 (MIEIEMEKPK…EHLNLFITLT (230 aa)). Positions 247–317 (KEKVLEMTIE…LGLGLRPSDE (71 aa)) are alpha C-terminal domain (alpha-CTD).

The protein belongs to the RNA polymerase alpha chain family. Homodimer. The RNAP catalytic core consists of 2 alpha, 1 beta, 1 beta' and 1 omega subunit. When a sigma factor is associated with the core the holoenzyme is formed, which can initiate transcription.

The enzyme catalyses RNA(n) + a ribonucleoside 5'-triphosphate = RNA(n+1) + diphosphate. DNA-dependent RNA polymerase catalyzes the transcription of DNA into RNA using the four ribonucleoside triphosphates as substrates. The chain is DNA-directed RNA polymerase subunit alpha from Alkaliphilus oremlandii (strain OhILAs) (Clostridium oremlandii (strain OhILAs)).